A 146-amino-acid polypeptide reads, in one-letter code: Hemoglobin subunit beta (146 aa).

V1 bears the N-acetylvaline mark. The Globin domain maps to 2–146; the sequence is HLTGEEKSAV…VANALAHKYH (145 aa). Residue T12 is modified to Phosphothreonine. Residue S44 is modified to Phosphoserine. K59 is subject to N6-acetyllysine. H63 contributes to the heme b binding site. An N6-acetyllysine modification is found at K82. H92 provides a ligand contact to heme b. C93 carries the S-nitrosocysteine modification. Residue K144 is modified to N6-acetyllysine.

It belongs to the globin family. In terms of assembly, heterotetramer of two alpha chains and two beta chains. In terms of tissue distribution, red blood cells.

In terms of biological role, involved in oxygen transport from the lung to the various peripheral tissues. The protein is Hemoglobin subunit beta (HBB) of Leontocebus fuscicollis (Brown-mantled tamarin).